The chain runs to 340 residues: Ketol-acid reductoisomerase (NADP(+)) (340 aa).

One can recognise a KARI N-terminal Rossmann domain in the interval 3-182 (VTMYYEEDVE…GCARVGIIET (180 aa)). NADP(+) is bound by residues 26-29 (YGSQ), R49, S53, and 83-86 (DELQ). H108 is a catalytic residue. G134 is a binding site for NADP(+). The region spanning 183–328 (TFKEETEEDL…AELRKAMPFT (146 aa)) is the KARI C-terminal knotted domain. Residues D191, E195, E227, and E231 each coordinate Mg(2+). Residue S252 coordinates substrate.

This sequence belongs to the ketol-acid reductoisomerase family. Mg(2+) serves as cofactor.

The enzyme catalyses (2R)-2,3-dihydroxy-3-methylbutanoate + NADP(+) = (2S)-2-acetolactate + NADPH + H(+). It carries out the reaction (2R,3R)-2,3-dihydroxy-3-methylpentanoate + NADP(+) = (S)-2-ethyl-2-hydroxy-3-oxobutanoate + NADPH + H(+). It functions in the pathway amino-acid biosynthesis; L-isoleucine biosynthesis; L-isoleucine from 2-oxobutanoate: step 2/4. Its pathway is amino-acid biosynthesis; L-valine biosynthesis; L-valine from pyruvate: step 2/4. Its function is as follows. Involved in the biosynthesis of branched-chain amino acids (BCAA). Catalyzes an alkyl-migration followed by a ketol-acid reduction of (S)-2-acetolactate (S2AL) to yield (R)-2,3-dihydroxy-isovalerate. In the isomerase reaction, S2AL is rearranged via a Mg-dependent methyl migration to produce 3-hydroxy-3-methyl-2-ketobutyrate (HMKB). In the reductase reaction, this 2-ketoacid undergoes a metal-dependent reduction by NADPH to yield (R)-2,3-dihydroxy-isovalerate. This is Ketol-acid reductoisomerase (NADP(+)) from Lactococcus lactis subsp. cremoris (strain SK11).